The primary structure comprises 196 residues: Putative NADH dehydrogenase/NAD(P)H nitroreductase Reut_A1586 (196 aa).

Belongs to the nitroreductase family. HadB/RutE subfamily. It depends on FMN as a cofactor.

This chain is Putative NADH dehydrogenase/NAD(P)H nitroreductase Reut_A1586, found in Cupriavidus pinatubonensis (strain JMP 134 / LMG 1197) (Cupriavidus necator (strain JMP 134)).